We begin with the raw amino-acid sequence, 302 residues long: ATP synthase gamma chain, sodium ion specific (302 aa).

It belongs to the ATPase gamma chain family. F-type ATPases have 2 components, CF(1) - the catalytic core - and CF(0) - the membrane proton channel. CF(1) has five subunits: alpha(3), beta(3), gamma(1), delta(1), epsilon(1). CF(0) has three main subunits: a, b and c.

The protein resides in the cell membrane. With respect to regulation, inhibited by nitrate. Produces ATP from ADP in the presence of a proton gradient across the membrane. The gamma chain is believed to be important in regulating ATPase activity and the flow of protons through the CF(0) complex. This chain is ATP synthase gamma chain, sodium ion specific (atpG), found in Acetobacterium woodii (strain ATCC 29683 / DSM 1030 / JCM 2381 / KCTC 1655 / WB1).